The primary structure comprises 772 residues: Semaphorin-3A (772 aa).

Residues 1-22 (MGWLRGIALLSLGVLLAGRVNC) form the signal peptide. Residues 31–514 (RLKLSYKEML…SATGVSQLPL (484 aa)) enclose the Sema domain. The N-linked (GlcNAc...) asparagine glycan is linked to Asn-53. The cysteines at positions 103 and 114 are disulfide-linked. An N-linked (GlcNAc...) asparagine glycan is attached at Asn-125. 4 disulfides stabilise this stretch: Cys-132/Cys-141, Cys-269/Cys-381, Cys-293/Cys-341, and Cys-517/Cys-535. The 90-residue stretch at 576-665 (PSGQTLEEKI…GFIQTLLKVT (90 aa)) folds into the Ig-like C2-type domain. A glycan (N-linked (GlcNAc...) asparagine) is linked at Asn-591. A disulfide bridge connects residues Cys-650 and Cys-723. The tract at residues 730–772 (DRKQRRQRPANAQVNTNKWKHLQENKKGRNRRTHEFERAPRSV) is disordered. Over residues 750–772 (HLQENKKGRNRRTHEFERAPRSV) the composition is skewed to basic and acidic residues.

It belongs to the semaphorin family. As to expression, expressed at relatively high levels in brain and muscle, moderate levels in lung, bursa, and heart and virtually absent in liver. Collapsin-1, -2, -3, and -5 bind to overlapping but distinct axon tracts.

It localises to the secreted. In terms of biological role, induces the collapse and paralysis of neuronal growth cones. Could serve as a ligand that guides specific growth cones by a motility-inhibiting mechanism. Binds to neuropilin. The chain is Semaphorin-3A (SEMA3A) from Gallus gallus (Chicken).